The primary structure comprises 85 residues: Homeobox protein knotted-1-like 5 (85 aa).

The ELK domain occupies 1–21; that stretch reads ELKEMLLKKYSGCLSRLRSEF. The homeobox; TALE-type DNA-binding region spans 22–85; sequence LKKRKKGKLP…NQRKRHWKPS (64 aa).

It belongs to the TALE/KNOX homeobox family. Strongly expressed in ear inflorescence primordia and shoot meristem. Weakly expressed in embryos. Absent from leaves.

Its subcellular location is the nucleus. Its function is as follows. Probably binds to the DNA sequence 5'-TGAC-3'. This chain is Homeobox protein knotted-1-like 5 (KNOX5), found in Zea mays (Maize).